The sequence spans 2181 residues: Genome polyprotein (2181 aa).

Residue Gly-80 is the site of N-myristoyl glycine; by host attachment. Interaction with host receptor ANTXR1 stretches follow at residues 316–337 and 761–772; these read DYRTGKNMPFQSLGTYYRPPNW and RFGLYANPSGSG. An SF3 helicase domain is found at 1165 to 1333; sequence LGKTNLAQSL…YKKHTRLNFD (169 aa). Position 1197 to 1204 (1197 to 1204) interacts with ATP; that stretch reads GKPGCGKS. Residues 1472-1500 form a disordered region; sequence EETESEGSVKAPRSENAYDGPKKNSKPPG. At Tyr-1489 the chain carries O-(5'-phospho-RNA)-tyrosine. The region spanning 1511–1704 is the Peptidase C3 domain; it reads NVDMGFEAAV…AGTYISKLGL (194 aa). Residue His-1556 is the For protease 3C activity and deubiquitinase activity of the active site. Asp-1592 serves as the catalytic For protease 3C activity. The active-site For protease 3C activity and deubiquitinase activity is the Cys-1668. Residues 1950–2068 form the RdRp catalytic domain; it reads KNTYDVDYSA…GTDYDLDFNE (119 aa). Active-site for RdRp activity residues include Asp-1956 and Asp-2054.

As to quaternary structure, interacts with host entry receptor ANTRX1. In terms of assembly, interacts with host IRF3; this interaction is involved in the suppression of IRF3 and IRF7 expression and phosphorylation by the virus. Interacts with host IRF7; this interaction is involved in the suppression of IRF3 and IRF7 expression and phosphorylation by the virus. Interacts with host MAVS; this interaction allows the cleavage of MAVS and subsequent suppression of host immunity. Interacts with host TRIF; this interaction allows the cleavage of TRIF and subsequent suppression of host immunity. Interacts with host TANK; this interaction allows the cleavage of TANK and subsequent suppression of host immunity. Interacts with host RIGI. Interacts with host TBK1. Interacts with host TRAF3. Specific enzymatic cleavages by the viral protease in vivo yield a variety of precursors and mature proteins. The polyprotein seems to be cotranslationally cleaved at the 2A/2B junction by a ribosomal skip from one codon to the next without formation of a peptide bond. This process would release the P1-2A peptide from the translational complex. Post-translationally, during virion maturation, immature virions are rendered infectious following cleavage of VP0 into VP4 and VP2. This maturation seems to be an autocatalytic event triggered by the presence of RNA in the capsid and is followed by a conformational change of the particle. In terms of processing, myristoylation is required during RNA encapsidation and formation of the mature virus particle. Uridylylated by the polymerase and is covalently linked to the 5'-end of genomic RNA. This uridylylated form acts as a nucleotide-peptide primer for the polymerase.

The protein resides in the virion. The protein localises to the host cytoplasm. Its subcellular location is the host nucleus. It is found in the host nucleolus. It localises to the host cytoplasmic vesicle membrane. It carries out the reaction RNA(n) + a ribonucleoside 5'-triphosphate = RNA(n+1) + diphosphate. The catalysed reaction is Selective cleavage of Gln-|-Gly bond in the poliovirus polyprotein. In other picornavirus reactions Glu may be substituted for Gln, and Ser or Thr for Gly.. It catalyses the reaction Thiol-dependent hydrolysis of ester, thioester, amide, peptide and isopeptide bonds formed by the C-terminal Gly of ubiquitin (a 76-residue protein attached to proteins as an intracellular targeting signal).. The enzyme catalyses ATP + H2O = ADP + phosphate + H(+). Forms an icosahedral capsid of pseudo T=3 symmetry with capsid proteins VP2 and VP3. Together they form an icosahedral capsid composed of 60 copies of each VP1, VP2, and VP3, with a diameter of approximately 325 Angstroms. VP4 lies on the inner surface of the protein shell formed by VP1, VP2 and VP3. All the three latter proteins contain a beta-sheet structure called beta-barrel jelly roll. VP1 is situated at the 12 fivefold axes, whereas VP2 and VP3 are located at the quasi-sixfold axes. Binds the host receptor ANTXR1 for attachment and uncoating (entry). Functionally, forms an icosahedral capsid of pseudo T=3 symmetry with capsid proteins VP2 and VP3. Together they form an icosahedral capsid composed of 60 copies of each VP1, VP2, and VP3, with a diameter of approximately 270 Angstroms. VP4 lies on the inner surface of the protein shell formed by VP1, VP2 and VP3. All the three latter proteins contain a beta-sheet structure called beta-barrel jelly roll. VP1 is situated at the 12 fivefold axes, whereas VP2 and VP3 are located at the quasi-sixfold axes. Binds the host receptor ANTXR1 for attachment and uncoating (entry). Its function is as follows. Forms an icosahedral capsid of pseudo T=3 symmetry with capsid proteins VP2 and VP3. Together they form an icosahedral capsid composed of 60 copies of each VP1, VP2, and VP3, with a diameter of approximately 270 Angstroms. VP4 lies on the inner surface of the protein shell formed by VP1, VP2 and VP3. All the three latter proteins contain a beta-sheet structure called beta-barrel jelly roll. VP1 is situated at the 12 fivefold axes, whereas VP2 and VP3 are located at the quasi-sixfold axes. Vp3 also seems to be involved in the binding to host receptor ANTXR1 for attachment and uncoating (entry). In terms of biological role, lies on the inner surface of the capsid shell. After binding to the host receptor, the capsid undergoes conformational changes. Capsid protein VP4 is released, capsid protein VP1 N-terminus is externalized, and together, they shape a pore in the host membrane through which the viral genome is translocated into the host cell cytoplasm. After genome has been released, the channel shrinks. VP0 precursor is a component of immature procapsids. Functionally, mediates self-processing of the polyprotein by a translational effect termed 'ribosome skipping'. Mechanistically, 2A-mediated cleavage occurs between the C-terminal glycine and the proline of the downstream protein 2B. Its function is as follows. Plays an essential role in the virus replication cycle by acting as a viroporin. Creates a pore in the host endoplasmic reticulum and as a consequence releases Ca2+ in the cytoplasm of infected cell. In turn, high levels of cytoplasmic calcium may trigger membrane trafficking and transport of viral ER-associated proteins to viroplasms, sites of viral genome replication. In terms of biological role, associates with and induces structural rearrangements of intracellular membranes. Covalently linked to the 5'-end of both the positive-strand and negative-strand genomic RNAs. Acts as a genome-linked replication primer. Functionally, cysteine protease that generates mature viral proteins from the precursor polyprotein. Inactivates crucial host adapter molecules in order to suppress antiviral type-I interferon (type-I IFN) and NF-kappaB production to escape host antiviral innate immune responses. Deubiquitinase that acts on both lysine-48- and lysine-63-linked polyubiquitin chains and inhibits the ubiquitination of the ATP-dependent RNA helicase RIGI, TANK-binding kinase 1 (TBK1), and TNF receptor-associated factor 3 (TRAF3), thereby blocking the expression of IFN-beta and IFN stimulated gene 54 (ISG54). Induces host IRF3 and IRF7 degradation thereby suppressing IRF3- and IRF7-induced type-I IFN production. Also decreases host IRF3 phosphorylation leading to negligible IRF3 activation. Cleaves host MAVS, TRIF and TANK, which are then unable to regulate pattern recognition receptor (PRR)-mediated type-I IFN production. Inhibits the integrated stress response (ISR) in the infected cell by disrupting eIF4GI-G3BP1 interaction. Stress granule formation is thus inhibited. Its function is as follows. Replicates the genomic and antigenomic RNAs by recognizing replications specific signals. Performs VPg uridylylation. This Sus scrofa (Pig) protein is Genome polyprotein.